Here is an 89-residue protein sequence, read N- to C-terminus: Small ribosomal subunit protein uS15 (89 aa).

Basic and acidic residues predominate over residues 1-20 (MSITQERKSALIAEHARGKT). Residues 1–24 (MSITQERKSALIAEHARGKTDTGS) are disordered.

This sequence belongs to the universal ribosomal protein uS15 family. As to quaternary structure, part of the 30S ribosomal subunit. Forms a bridge to the 50S subunit in the 70S ribosome, contacting the 23S rRNA.

One of the primary rRNA binding proteins, it binds directly to 16S rRNA where it helps nucleate assembly of the platform of the 30S subunit by binding and bridging several RNA helices of the 16S rRNA. Its function is as follows. Forms an intersubunit bridge (bridge B4) with the 23S rRNA of the 50S subunit in the ribosome. This Maricaulis maris (strain MCS10) (Caulobacter maris) protein is Small ribosomal subunit protein uS15.